The primary structure comprises 210 residues: Redox-sensing transcriptional repressor Rex (210 aa).

The segment at residues 17–56 (KYHRYLGDLLDRDIQRISSKELSDIIGFTASQIRQDLNNF) is a DNA-binding region (H-T-H motif). 91–96 (GAGNLG) is a binding site for NAD(+).

This sequence belongs to the transcriptional regulatory Rex family. In terms of assembly, homodimer.

It localises to the cytoplasm. In terms of biological role, modulates transcription in response to changes in cellular NADH/NAD(+) redox state. The sequence is that of Redox-sensing transcriptional repressor Rex from Clostridioides difficile (strain 630) (Peptoclostridium difficile).